The primary structure comprises 343 residues: tRNA N6-adenosine threonylcarbamoyltransferase (343 aa).

Positions 116 and 120 each coordinate Fe cation. Residues 138-142, aspartate 171, glycine 184, aspartate 188, and asparagine 277 contribute to the substrate site; that span reads LVSGG. Position 306 (aspartate 306) interacts with Fe cation.

It belongs to the KAE1 / TsaD family. Fe(2+) serves as cofactor.

The protein resides in the cytoplasm. The catalysed reaction is L-threonylcarbamoyladenylate + adenosine(37) in tRNA = N(6)-L-threonylcarbamoyladenosine(37) in tRNA + AMP + H(+). Required for the formation of a threonylcarbamoyl group on adenosine at position 37 (t(6)A37) in tRNAs that read codons beginning with adenine. Is involved in the transfer of the threonylcarbamoyl moiety of threonylcarbamoyl-AMP (TC-AMP) to the N6 group of A37, together with TsaE and TsaB. TsaD likely plays a direct catalytic role in this reaction. The protein is tRNA N6-adenosine threonylcarbamoyltransferase of Ligilactobacillus salivarius (strain UCC118) (Lactobacillus salivarius).